The sequence spans 541 residues: uncharacterized protein (541 aa).

An N-terminal signal peptide occupies residues 1-17; sequence MSFSATILFSPPSGSEA. Disordered stretches follow at residues 28 to 47 and 103 to 138; these read TSQG…TPIT and GKVC…SNSL. The span at 103–116 shows a compositional bias: basic and acidic residues; the sequence is GKVCTADEDRESRA. Thr-118 is modified (phosphothreonine). Glycyl lysine isopeptide (Lys-Gly) (interchain with G-Cter in SUMO2) cross-links involve residues Lys-128 and Lys-223. At Ser-226 the chain carries Phosphoserine. The segment covering 232–243 has biased composition (polar residues); the sequence is AIQRASSETGPE. The segment at 232-254 is disordered; the sequence is AIQRASSETGPESGTKLPATRPE. Ser-286 and Ser-429 each carry phosphoserine. The segment at 494–526 is disordered; it reads YNPNFQEDEGGGNEKGPVSPSYDQPHKTSCPDL.

It localises to the secreted. This is an uncharacterized protein from Mus musculus (Mouse).